Consider the following 130-residue polypeptide: Small ribosomal subunit protein uS9 (130 aa).

This sequence belongs to the universal ribosomal protein uS9 family.

In Halalkalibacterium halodurans (strain ATCC BAA-125 / DSM 18197 / FERM 7344 / JCM 9153 / C-125) (Bacillus halodurans), this protein is Small ribosomal subunit protein uS9.